The sequence spans 147 residues: Large ribosomal subunit protein bL9 (147 aa).

The disordered stretch occupies residues 40–60 (TTGNLKQHEAHERKAAEEAKQ). Over residues 45 to 59 (KQHEAHERKAAEEAK) the composition is skewed to basic and acidic residues.

The protein belongs to the bacterial ribosomal protein bL9 family.

Functionally, binds to the 23S rRNA. The protein is Large ribosomal subunit protein bL9 of Exiguobacterium sibiricum (strain DSM 17290 / CCUG 55495 / CIP 109462 / JCM 13490 / 255-15).